The following is a 137-amino-acid chain: Small ribosomal subunit protein uS12 (137 aa).

The disordered stretch occupies residues 1–57 (MPTINQLVRKPRKSKVEKSKSPALNVGYNSLKRVPTNESAPQKRGVATRVGTMTPKK). Asp-102 is subject to 3-methylthioaspartic acid.

Belongs to the universal ribosomal protein uS12 family. Part of the 30S ribosomal subunit. Contacts proteins S8 and S17. May interact with IF1 in the 30S initiation complex.

Its function is as follows. With S4 and S5 plays an important role in translational accuracy. Interacts with and stabilizes bases of the 16S rRNA that are involved in tRNA selection in the A site and with the mRNA backbone. Located at the interface of the 30S and 50S subunits, it traverses the body of the 30S subunit contacting proteins on the other side and probably holding the rRNA structure together. The combined cluster of proteins S8, S12 and S17 appears to hold together the shoulder and platform of the 30S subunit. In Streptococcus gordonii (strain Challis / ATCC 35105 / BCRC 15272 / CH1 / DL1 / V288), this protein is Small ribosomal subunit protein uS12.